We begin with the raw amino-acid sequence, 150 residues long: Ribonuclease K6 (150 aa).

A signal peptide spans 1–23; the sequence is MVLCFPLLLLLLVLWGPVCPLHA. The active-site Proton acceptor is His-38. 4 disulfide bridges follow: Cys-46–Cys-104, Cys-60–Cys-114, Cys-78–Cys-129, and Cys-85–Cys-92. N-linked (GlcNAc...) asparagine glycosylation occurs at Asn-55. Residues 61 to 65 and Lys-86 each bind substrate; that span reads KHQNT. Asn-100 carries N-linked (GlcNAc...) asparagine glycosylation. Arg-105 serves as a coordination point for substrate. The active-site Proton donor is the His-145.

It belongs to the pancreatic ribonuclease family. Interacts (via N-terminus) with bacterial lipopolysaccharide (LPS). In terms of tissue distribution, highly expressed in spleen (at protein level). Has little or no expression in healthy kidneys (at protein level). Detected in interstitial leukocytes in infected kidneys (at protein level). Expressed in ureter where it localizes to urothelial and submucosal leukocytes (at protein level). Strong expression in lung and thymus, and lower expression in heart, placenta, pancreas, liver, brain and skeletal muscle. Also expressed in monocytes and neutrophils.

Its subcellular location is the secreted. The protein localises to the lysosome. It localises to the cytoplasmic granule. Its function is as follows. Ribonuclease which shows a preference for the pyrimidines uridine and cytosine. Has potent antibacterial activity against a range of Gram-positive and Gram-negative bacteria, including P.aeruginosa, A.baumanii, M.luteus, S.aureus, E.faecalis, E.faecium, S.saprophyticus and E.coli. Causes loss of bacterial membrane integrity, and also promotes agglutination of Gram-negative bacteria. Probably contributes to urinary tract sterility. Bactericidal activity is independent of RNase activity. This is Ribonuclease K6 (RNASE6) from Homo sapiens (Human).